The sequence spans 593 residues: MKLDELRKKYIDFFKSKGHCEIAGKSLIPDNDSTVLFNTAGMQPLVPYLLGEMHPSGDMLVDVQKCLRTGDIDEVGDLSHLTFFEMLGNWSLGAYFKELSVKYSFEFLTSPNYLNISKDKLYVSVFEGDESIPRDTETANVWESLGIPKDRIFYLSREHNFWGPVGNTGPCGPDTEIFVDTGKEKCSVRCDITCSCGKYFEIWNNVFMQYKRDENGNYEELKRKCVDTGMGIERTITFLQGKSSVYDTDAFKPIIDKIEKISGKIYGQNLEDDRSIRIIADHIKASCFILADNFAVLPSNIGQGYVLRRIIRRAIRYAKKLGMESYVLADLVDSVEEIYKSFYKELTEKKDFIKAELNVEEEKFFKTLRHGEQEFIKLIQQLSSKSIPGDISFKLYDTYGFPYEITEELATEYGFSIDKAGFEEHFKKHQEVSKKGGDKVFKGGLADCTYETTKLHTATHLLHKALQLVLGEHVRQKGSNITAERLRFDFNHPYKMTDDEIKQVEDMVNLQIKNKLSVKRSVMNLDDALAKGAMALFGEKYEDIVSVYEIDGFSIEVCGGPHVKNTGELGTFKIQKEQASSSGVRRIRAILID.

4 residues coordinate Zn(2+): H456, H460, C558, and H562.

The protein belongs to the class-II aminoacyl-tRNA synthetase family. Requires Zn(2+) as cofactor.

Its subcellular location is the cytoplasm. The catalysed reaction is tRNA(Ala) + L-alanine + ATP = L-alanyl-tRNA(Ala) + AMP + diphosphate. Its function is as follows. Catalyzes the attachment of alanine to tRNA(Ala) in a two-step reaction: alanine is first activated by ATP to form Ala-AMP and then transferred to the acceptor end of tRNA(Ala). Also edits incorrectly charged Ser-tRNA(Ala) and Gly-tRNA(Ala) via its editing domain. This chain is Alanine--tRNA ligase (alaS), found in Borrelia hermsii (strain HS1 / DAH).